The chain runs to 350 residues: Very-long-chain 3-oxoacyl-CoA reductase (350 aa).

Residues 20-40 traverse the membrane as a helical segment; it reads ALLFSLLFGVFKLTTFTLRFA. Valine 66, aspartate 120, asparagine 147, tyrosine 221, lysine 225, valine 254, and serine 256 together coordinate NADP(+). The active-site Proton donor is tyrosine 221. Catalysis depends on lysine 225, which acts as the Lowers pKa of active site Tyr.

It belongs to the short-chain dehydrogenases/reductases (SDR) family.

The protein localises to the endoplasmic reticulum membrane. The enzyme catalyses a very-long-chain (3R)-3-hydroxyacyl-CoA + NADP(+) = a very-long-chain 3-oxoacyl-CoA + NADPH + H(+). It functions in the pathway lipid metabolism; fatty acid biosynthesis. Component of the microsomal membrane bound fatty acid elongation system, which produces the 26-carbon very long-chain fatty acids (VLCFA) from palmitate. Catalyzes the reduction of the 3-ketoacyl-CoA intermediate that is formed in each cycle of fatty acid elongation. VLCFAs serve as precursors for ceramide and sphingolipids. The polypeptide is Very-long-chain 3-oxoacyl-CoA reductase (Lodderomyces elongisporus (strain ATCC 11503 / CBS 2605 / JCM 1781 / NBRC 1676 / NRRL YB-4239) (Yeast)).